The sequence spans 376 residues: Lipid-A-disaccharide synthase (376 aa).

It belongs to the LpxB family.

The catalysed reaction is a lipid X + a UDP-2-N,3-O-bis[(3R)-3-hydroxyacyl]-alpha-D-glucosamine = a lipid A disaccharide + UDP + H(+). The protein operates within bacterial outer membrane biogenesis; LPS lipid A biosynthesis. Functionally, condensation of UDP-2,3-diacylglucosamine and 2,3-diacylglucosamine-1-phosphate to form lipid A disaccharide, a precursor of lipid A, a phosphorylated glycolipid that anchors the lipopolysaccharide to the outer membrane of the cell. This chain is Lipid-A-disaccharide synthase, found in Coxiella burnetii (strain CbuG_Q212) (Coxiella burnetii (strain Q212)).